The sequence spans 284 residues: NAD kinase (284 aa).

Aspartate 70 functions as the Proton acceptor in the catalytic mechanism. Residues aspartate 70 to glycine 71, asparagine 139 to glutamate 140, lysine 167, aspartate 169, leucine 177, threonine 180 to serine 185, and glutamine 236 each bind NAD(+).

This sequence belongs to the NAD kinase family. A divalent metal cation is required as a cofactor.

Its subcellular location is the cytoplasm. The enzyme catalyses NAD(+) + ATP = ADP + NADP(+) + H(+). Involved in the regulation of the intracellular balance of NAD and NADP, and is a key enzyme in the biosynthesis of NADP. Catalyzes specifically the phosphorylation on 2'-hydroxyl of the adenosine moiety of NAD to yield NADP. This Helicobacter pylori (strain J99 / ATCC 700824) (Campylobacter pylori J99) protein is NAD kinase.